The primary structure comprises 271 residues: 2-amino-3,7-dideoxy-D-threo-hept-6-ulosonate synthase (271 aa).

The active-site Proton acceptor is Asp-33. 1-deoxy-D-threo-hexo-2,5-diulose 6-phosphate contacts are provided by residues Asp-33 to Ser-37 and Tyr-153 to Arg-155. The active-site Proton donor is the Tyr-153. Lys-184 (schiff-base intermediate with substrate) is an active-site residue. Residues Gly-209–Gly-210 and Gly-236–Arg-237 each bind 1-deoxy-D-threo-hexo-2,5-diulose 6-phosphate.

It belongs to the DeoC/FbaB aldolase family. ADHS subfamily. Homodecamer.

The catalysed reaction is 1-deoxy-D-threo-hexo-2,5-diulose 6-phosphate + L-aspartate 4-semialdehyde = 2,3-dioxopropyl phosphate + 2-amino-2,3,7-trideoxy-D-lyxo-hept-6-ulosonate. Its function is as follows. Catalyzes a transaldol reaction between 6-deoxy-5-ketofructose 1-phosphate (DKFP) and L-aspartate semialdehyde (ASA) with an elimination of hydroxypyruvaldehyde phosphate to yield 2-amino-3,7-dideoxy-D-threo-hept-6-ulosonate (ADH). Plays a key role in an alternative pathway of the biosynthesis of 3-dehydroquinate (DHQ), which is involved in the canonical pathway for the biosynthesis of aromatic amino acids. The polypeptide is 2-amino-3,7-dideoxy-D-threo-hept-6-ulosonate synthase (Methanococcus aeolicus (strain ATCC BAA-1280 / DSM 17508 / OCM 812 / Nankai-3)).